We begin with the raw amino-acid sequence, 1021 residues long: Solute carrier family 12 member 3 (1021 aa).

Residues 1 to 137 (MAELPTTETP…KNPEEPVRFG (137 aa)) are Cytoplasmic-facing. A Phosphoserine modification is found at S43. Position 46 is a phosphothreonine; by OXSR1 and STK39 (T46). At S49 the chain carries Phosphoserine. T50 carries the phosphothreonine modification. Residues T55 and T60 each carry the phosphothreonine; by OXSR1 and STK39 modification. Phosphoserine is present on S73. Phosphoserine; by OXSR1 and STK39 is present on S91. Residue T124 is modified to Phosphothreonine. Residue S126 is modified to Phosphoserine. Residues 138–167 (WVKGVMIRCMLNIWGVILYLRLPWITAQAG) form a discontinuously helical membrane-spanning segment. A Na(+)-binding site is contributed by L148. Polythiazide is bound at residue N149. W151 contacts Na(+). A helical membrane pass occupies residues 168–189 (IVLTWIIILLSVTVTSITGLSI). At 190-220 (SAISTNGKVKSGGTYFLISRSLGPELGGSIG) the chain is on the cytoplasmic side. A helical membrane pass occupies residues 221–243 (LIFAFANAVGVAMHTVGFAETVR). Positions 227 and 234 each coordinate polythiazide. Over 244-255 (DLLQEYGAPIVD) the chain is Extracellular. A run of 2 helical transmembrane segments spans residues 256–280 (PIND…AGME) and 281–303 (WESK…YLVG). Topologically, residues 304-338 (TLIPPSEDKASKGFFSYRADIFVQNLVPDWRGPDG) are extracellular. Residues 339-360 (TFFGMFSIFFPSATGILAGANI) form a discontinuously helical membrane-spanning segment. Residue T352 participates in polythiazide binding. The chloride site is built by G353, I354, and L355. Residue N359 participates in polythiazide binding. The Cytoplasmic segment spans residues 361–371 (SGDLKDPAIAI). A helical transmembrane segment spans residues 372–393 (PKGTLMAIFWTTISYLAISATI). The Extracellular segment spans residues 394–453 (GSCVVRDASGVLNDTVTPGWGACEGLACSYGWNFTECTQQHSCHYGLINYYQTMSMVSGF). N406 is a glycosylation site (N-linked (GlcNAc...) asparagine). Residues C416 and C421 are joined by a disulfide bond. N426 carries N-linked (GlcNAc...) asparagine glycosylation. Cysteines 430 and 436 form a disulfide. Residues 454-477 (APLITAGIFGATLSSALACLVSAA) form a helical membrane-spanning segment. 3 residues coordinate Na(+): A464, S467, and S468. At 478-507 (KVFQCLCEDQLYPLIGFFGKGYGKNKEPVR) the chain is on the cytoplasmic side. A helical membrane pass occupies residues 508–522 (GYLLAYAIAVAFIII). The Extracellular portion of the chain corresponds to 523–527 (AELNT). Residues 528–544 (IAPIISNFFLCSYALIN) traverse the membrane as a helical segment. Y540 provides a ligand contact to chloride. Over 545–567 (FSCFHASITNSPGWRPSFQYYNK) the chain is Cytoplasmic. 2 helical membrane-spanning segments follow: residues 568 to 587 (WAAL…LTWW) and 588 to 599 (AALIAIGVVLFL). Over 600-1021 (LLYVIYKKPE…QENVLTFYCQ (422 aa)) the chain is Cytoplasmic. The scissor helix stretch occupies residues 615-630 (SVQAGSYNLALSYSVG). ATP contacts are provided by L648, R655, V677, G741, L780, and N781.

It belongs to the SLC12A transporter family. As to quaternary structure, homodimer; adopts a domain-swap conformation at the scissor helices connecting the transmembrane domain and C-terminal domain. Interacts with KLHL3. Interacts with IL18R1; this interaction is increased by IL18 treatment. Post-translationally, ubiquitinated; ubiquitination is essential for regulation of endocytosis. The BCR(KLHL3) complex was initially identified as a candidate ubiquitin ligase for SLC12A3. However, it was later shown that it is not the case. In terms of processing, phosphorylated at Thr-46, Thr-55, Thr-60 and Ser-91 by OXSR1/OSR1 and STK39/SPAK downstream of WNK4, promoting its activity. Phosphorylated in response to IL18. As to expression, predominantly expressed in the kidney (at protein level). Localizes to the distal convoluted tubules (at protein level). Not detected in normal aorta, but abundantly expressed in fatty streaks and advanced atherosclerotic lesions (at protein level).

The protein localises to the cell membrane. It is found in the apical cell membrane. It carries out the reaction chloride(out) + Na(+)(out) = chloride(in) + Na(+)(in). Phosphorylation by OXSR1/OSR1 and STK39/SPAK in kidney distal convoluted tubules downstream of WNK4 promotes its activity. Also activated by OXSR1/OSR1 and STK39/SPAK downstream of WNK3. Target of thiazide diuretics used in the treatment of high blood pressure. Thiazide drugs, such as polythiazide, specifically inhibit SLC12A3/NCC transporter activity by competing with chloride for binding and by locking SLC12A3/NCC in an outward-facing conformation. Functionally, electroneutral sodium and chloride ion cotransporter, which acts as a key mediator of sodium and chloride reabsorption in kidney distal convoluted tubules. Also acts as a receptor for the pro-inflammatory cytokine IL18, thereby contributing to IL18-induced cytokine production, including IFNG, IL6, IL18 and CCL2. May act either independently of IL18R1, or in a complex with IL18R1. This is Solute carrier family 12 member 3 from Homo sapiens (Human).